Reading from the N-terminus, the 124-residue chain is UPF0231 protein Shewana3_0655 (124 aa).

This sequence belongs to the UPF0231 family.

The chain is UPF0231 protein Shewana3_0655 from Shewanella sp. (strain ANA-3).